Consider the following 371-residue polypeptide: Flagellar P-ring protein (371 aa).

Positions 1-24 (MSIRVLLFSIFTGFLLAAAGPALA) are cleaved as a signal peptide. The span at 301-321 (PQPFSSGTTATQPQTDISAQK) shows a compositional bias: polar residues. Positions 301–322 (PQPFSSGTTATQPQTDISAQKT) are disordered.

It belongs to the FlgI family. The basal body constitutes a major portion of the flagellar organelle and consists of four rings (L,P,S, and M) mounted on a central rod.

It is found in the periplasm. The protein resides in the bacterial flagellum basal body. Functionally, assembles around the rod to form the L-ring and probably protects the motor/basal body from shearing forces during rotation. This is Flagellar P-ring protein from Allorhizobium ampelinum (strain ATCC BAA-846 / DSM 112012 / S4) (Agrobacterium vitis (strain S4)).